We begin with the raw amino-acid sequence, 495 residues long: MGQIITFFQEVPHIIEEVMNIVLITLSLLAILKGVYNVMTCGLIGLISFLLLCGKSCSLIYKDTYNFSSIELDLSHLNMTLPMSCSRNNSHHYVFFNGSGLEMTFTNDSLLNHKFCNLSDAHKKNLYDHALMGIVTTFHLSIPNFNQYEAMACDFNGGNISIQYNLSHNDRTDAMNHCGTVANGVLDAFYRFHWGRNITYIAQLPNGDGTGRWTFCYATSYKYLVIQNISWADHCQMSRPTPIGFASILSQRIRSIYISRRLMSTFTWSLSDSSGTENPGGYCLTRWMLFAADLKCFGNTAIAKCNLNHDEEFCDMLRLIDFNKQALKTFKSEVNHGLQLITKAINALINDQLIMKNHLRDLMGIPYCNYSKFWYLNDTRTGRVSLPKCWMISNGTYLNETHFSDEIEQEADNMITEMLRKEYQERQGKTPLGLVDLFIFSTSFYSITVFLHLIKIPTHRHIVGQGCPKPHRLNSRAICSCGAYKQPGLPTKWKR.

Residue Gly-2 is the site of N-myristoyl glycine; by host attachment. Topologically, residues 2–17 (GQIITFFQEVPHIIEE) are extracellular. Residues 18-33 (VMNIVLITLSLLAILK) form a helical membrane-spanning segment. Over 34-58 (GVYNVMTCGLIGLISFLLLCGKSCS) the chain is Cytoplasmic. Cys-57 contributes to the Zn(2+) binding site. Over 59–436 (LIYKDTYNFS…QGKTPLGLVD (378 aa)) the chain is Extracellular. Residues Asn-78, Asn-88, Asn-107, Asn-117, and Asn-165 are each glycosylated (N-linked (GlcNAc...) asparagine; by host). 6 disulfide bridges follow: Cys-85–Cys-235, Cys-116–Cys-153, Cys-178–Cys-216, Cys-283–Cys-296, Cys-305–Cys-314, and Cys-368–Cys-389. An N-linked (GlcNAc...) asparagine; by host glycan is attached at Asn-228. 4 N-linked (GlcNAc...) asparagine; by host glycosylation sites follow: Asn-369, Asn-377, Asn-394, and Asn-399. The chain crosses the membrane as a helical span at residues 437–457 (LFIFSTSFYSITVFLHLIKIP). At 458-495 (THRHIVGQGCPKPHRLNSRAICSCGAYKQPGLPTKWKR) the chain is on the cytoplasmic side. Zn(2+) contacts are provided by His-459, His-461, Cys-467, His-471, Cys-479, and Cys-481.

This sequence belongs to the arenaviridae GPC protein family. Interacts with glycoprotein G2. Part of the GP complex (GP-C) together with glycoprotein G1 and glycoprotein G2. The GP-complex interacts with protein Z, which interacts with ribonucleocapsid; these interactions may induce virion budding. As to quaternary structure, homotrimer; disulfide-linked. In pre-fusion state, G1 homotrimers bind G2 homotrimers via ionic interactions. Part of the GP complex (GP-C) together with glycoprotein G2 and the stable signal peptide. The GP-complex interacts with protein Z, which interacts with ribonucleocapsid; these interactions may induce virion budding. In terms of assembly, homotrimer. Interacts with the stable signal peptide. In pre-fusion state, G2 homotrimers bind G1 homotrimers via ionic interactions. Part of the GP complex (GP-C) together with glycoprotein G1 and the stable signal peptide. Acidification in the endosome triggers rearrangements, which ultimately leads to a 6 helix bundle formed by the two heptad repeat domains (HR1 and HR2) in post-fusion state. The GP-complex interacts with protein Z, which interacts with ribonucleocapsid; these interactions may induce virion budding. Specific enzymatic cleavages in vivo yield mature proteins. GP-C polyprotein is cleaved in the endoplasmic reticulum by the host protease MBTPS1. Only cleaved glycoprotein is incorporated into virions. In terms of processing, the SSP remains stably associated with the GP complex following cleavage by signal peptidase and plays crucial roles in the trafficking of GP through the secretory pathway. Post-translationally, myristoylation is necessary for GP2-mediated fusion activity.

It localises to the virion membrane. It is found in the host endoplasmic reticulum membrane. The protein resides in the host Golgi apparatus membrane. The protein localises to the host cell membrane. Its function is as follows. Functions as a cleaved signal peptide that is retained as the third component of the GP complex (GP-C). Helps to stabilize the spike complex in its native conformation. The SSP is required for efficient glycoprotein expression, post-translational maturation cleavage of G1 and G2, glycoprotein transport to the cell surface plasma membrane, formation of infectious virus particles, and acid pH-dependent glycoprotein-mediated cell fusion. Functionally, forms the virion spikes together with glycoprotein G2. The glycoprotein spike trimers are connected to the underlying matrix. Mediates virus attachment to host receptor alpha-dystroglycan DAG1. This interaction leads to virion entry into the host cell through the endosomal pathway. In terms of biological role, forms the virion spikes together with glycoprotein G1. The glycoprotein spike trimers are connected to the underlying matrix. Class I viral fusion protein that directs fusion of viral and host endosomal membranes, leading to delivery of the nucleocapsid into the cytoplasm. Membrane fusion is mediated by irreversible conformational changes induced by acidification. In Ippy mammarenavirus (isolate Rat/Central African Republic/Dak An B 188 d/1970) (IPPYV), this protein is Pre-glycoprotein polyprotein GP complex.